The sequence spans 227 residues: Cytochrome c oxidase subunit 2 (227 aa).

Topologically, residues 1–14 are mitochondrial intermembrane; the sequence is MAYPMQLGFQDATS. The helical transmembrane segment at 15-45 threads the bilayer; that stretch reads PIMEELLHFHDHTLMIVFLISSLVLYIISLM. The Mitochondrial matrix portion of the chain corresponds to 46-59; the sequence is LTTKLTHTSTMDAQ. The chain crosses the membrane as a helical span at residues 60–87; it reads EVETIWTILPAIILILIALPSLRILYMM. Residues 88–227 are Mitochondrial intermembrane-facing; sequence DEINNPSLTV…YFEKWSASML (140 aa). Positions 161, 196, 198, 200, 204, and 207 each coordinate Cu cation. Glutamate 198 is a Mg(2+) binding site. Phosphotyrosine is present on tyrosine 218.

It belongs to the cytochrome c oxidase subunit 2 family. In terms of assembly, component of the cytochrome c oxidase (complex IV, CIV), a multisubunit enzyme composed of 14 subunits. The complex is composed of a catalytic core of 3 subunits MT-CO1, MT-CO2 and MT-CO3, encoded in the mitochondrial DNA, and 11 supernumerary subunits COX4I, COX5A, COX5B, COX6A, COX6B, COX6C, COX7A, COX7B, COX7C, COX8 and NDUFA4, which are encoded in the nuclear genome. The complex exists as a monomer or a dimer and forms supercomplexes (SCs) in the inner mitochondrial membrane with NADH-ubiquinone oxidoreductase (complex I, CI) and ubiquinol-cytochrome c oxidoreductase (cytochrome b-c1 complex, complex III, CIII), resulting in different assemblies (supercomplex SCI(1)III(2)IV(1) and megacomplex MCI(2)III(2)IV(2)). Found in a complex with TMEM177, COA6, COX18, COX20, SCO1 and SCO2. Interacts with TMEM177 in a COX20-dependent manner. Interacts with COX20. Interacts with COX16. Requires Cu cation as cofactor.

The protein resides in the mitochondrion inner membrane. The catalysed reaction is 4 Fe(II)-[cytochrome c] + O2 + 8 H(+)(in) = 4 Fe(III)-[cytochrome c] + 2 H2O + 4 H(+)(out). Functionally, component of the cytochrome c oxidase, the last enzyme in the mitochondrial electron transport chain which drives oxidative phosphorylation. The respiratory chain contains 3 multisubunit complexes succinate dehydrogenase (complex II, CII), ubiquinol-cytochrome c oxidoreductase (cytochrome b-c1 complex, complex III, CIII) and cytochrome c oxidase (complex IV, CIV), that cooperate to transfer electrons derived from NADH and succinate to molecular oxygen, creating an electrochemical gradient over the inner membrane that drives transmembrane transport and the ATP synthase. Cytochrome c oxidase is the component of the respiratory chain that catalyzes the reduction of oxygen to water. Electrons originating from reduced cytochrome c in the intermembrane space (IMS) are transferred via the dinuclear copper A center (CU(A)) of subunit 2 and heme A of subunit 1 to the active site in subunit 1, a binuclear center (BNC) formed by heme A3 and copper B (CU(B)). The BNC reduces molecular oxygen to 2 water molecules using 4 electrons from cytochrome c in the IMS and 4 protons from the mitochondrial matrix. The protein is Cytochrome c oxidase subunit 2 (MT-CO2) of Bison bonasus (European bison).